A 1285-amino-acid polypeptide reads, in one-letter code: Peroxidasin homolog pxn-1 (1285 aa).

A signal peptide spans 1–20; sequence MNLYLLLLVIATSSWQFVAG. The 33-residue stretch at 21-53 folds into the LRRNT domain; that stretch reads LECPVECTCDKKGLVVDCSSSGLTRIPKNISRN. 7 LRR repeats span residues 27–49, 50–72, 73–96, 97–120, 122–143, 145–168, and 204–227; these read CTCD…IPKN, ISRN…RSDL, EGFN…ENVL, DHLP…PLCS, SRPL…EQVL, YFPD…KLFD, and KVYC…SALT. A glycan (N-linked (GlcNAc...) asparagine) is linked at asparagine 49. Positions 180–228 constitute an LRRCT domain; that stretch reads SNPWHCDCRASKVKALLQKVKWEKKVYCTNPVELRHQALDEVDDSALTC. N-linked (GlcNAc...) asparagine glycosylation occurs at asparagine 248. The interval 305 to 324 is disordered; sequence RQSQHQGNGSPQFTYKPRDN. The segment covering 307 to 317 has biased composition (polar residues); it reads SQHQGNGSPQF. Ig-like C2-type domains are found at residues 315 to 401 and 408 to 495; these read PQFT…FSLD and PNIY…AKLT. 2 disulfide bridges follow: cysteine 336/cysteine 385 and cysteine 429/cysteine 479. The stretch at 508–550 forms a coiled coil; it reads QIDEELLRAIAQKARQNVENAVEKTRKQLTQDKVTNTNDLKRL. Asparagine 595 carries an N-linked (GlcNAc...) asparagine glycan. Residues cysteine 625 and cysteine 641 are joined by a disulfide bond. Aspartate 719 provides a ligand contact to heme b. The active-site Proton acceptor is the histidine 720. Aspartate 721 is a binding site for Ca(2+). 2 disulfide bridges follow: cysteine 740/cysteine 750 and cysteine 744/cysteine 771. An N-linked (GlcNAc...) asparagine glycan is attached at asparagine 741. Ca(2+) contacts are provided by threonine 803, phenylalanine 805, aspartate 807, and serine 809. Asparagine 858 is a glycosylation site (N-linked (GlcNAc...) asparagine). Glutamate 877 and histidine 973 together coordinate heme b. LRR repeat units lie at residues 998–1022 and 1049–1073; these read HKAF…GLFA and VSLD…TEYR. 2 cysteine pairs are disulfide-bonded: cysteine 1076–cysteine 1133 and cysteine 1174–cysteine 1201. The LRR 12 repeat unit spans residues 1168-1189; the sequence is TLARLFCDNGDNIDRIQKDVFM.

It belongs to the peroxidase family. XPO subfamily. Ca(2+) serves as cofactor. Heme b is required as a cofactor. Expressed in the ventral nerve cord, the dorsal nerve cord, head neurons, GABAergic and cholinergic neurons, body wall muscles, vulval muscles, uterine muscles, intestine, the hypodermis and in coelomocytes.

The protein resides in the secreted. It localises to the extracellular space. The protein localises to the extracellular matrix. The enzyme catalyses L-lysyl-[collagen] + L-methionyl-[collagen] + H2O2 = [collagen]-L-lysyl-N-S-L-methionyl-[collagen] + 2 H2O + H(+). It catalyses the reaction bromide + H2O2 = hypobromite + H2O. The catalysed reaction is L-lysyl-[collagen] + L-methionyl-[collagen] + hypobromite = [collagen]-L-lysyl-N-S-L-methionyl-[collagen] + bromide + H2O + H(+). It carries out the reaction L-tyrosyl-[protein] + bromide + H2O2 + H(+) = 3-bromo-L-tyrosyl-[protein] + 2 H2O. The enzyme catalyses hypobromite + L-tyrosyl-[protein] + H(+) = 3-bromo-L-tyrosyl-[protein] + H2O. In terms of biological role, catalyzes the two-electron oxidation of bromide by hydrogen peroxide and generates hypobromite as a reactive intermediate which mediates the formation of sulfilimine cross-links between methionine and hydroxylysine residues within an uncross-linked collagen IV NC1 hexamer. Plays a role in the attachment of tissues and in axonal guidance during early developmental stages. May functionally antagonize the peroxidasin pxn-2 to maintain neuronal development. This is Peroxidasin homolog pxn-1 from Caenorhabditis elegans.